Consider the following 341-residue polypeptide: N-acetyl-gamma-glutamyl-phosphate reductase (341 aa).

The active site involves cysteine 145.

The protein belongs to the NAGSA dehydrogenase family. Type 1 subfamily.

It is found in the cytoplasm. It carries out the reaction N-acetyl-L-glutamate 5-semialdehyde + phosphate + NADP(+) = N-acetyl-L-glutamyl 5-phosphate + NADPH + H(+). It functions in the pathway amino-acid biosynthesis; L-arginine biosynthesis; N(2)-acetyl-L-ornithine from L-glutamate: step 3/4. Functionally, catalyzes the NADPH-dependent reduction of N-acetyl-5-glutamyl phosphate to yield N-acetyl-L-glutamate 5-semialdehyde. This is N-acetyl-gamma-glutamyl-phosphate reductase from Streptomyces clavuligerus.